Consider the following 235-residue polypeptide: Ribosomal RNA small subunit methyltransferase G (235 aa).

Residues Gly-74, Leu-79, 124–125, and Arg-142 contribute to the S-adenosyl-L-methionine site; that span reads AE. The segment at 211 to 235 is disordered; it reads RRRAAKPGRNKSGRTARSRGRTGRR. Over residues 213–235 the composition is skewed to basic residues; sequence RAAKPGRNKSGRTARSRGRTGRR.

The protein belongs to the methyltransferase superfamily. RNA methyltransferase RsmG family.

The protein localises to the cytoplasm. Its function is as follows. Specifically methylates the N7 position of guanine in position 518 of 16S rRNA. This Mycolicibacterium smegmatis (strain ATCC 700084 / mc(2)155) (Mycobacterium smegmatis) protein is Ribosomal RNA small subunit methyltransferase G.